The primary structure comprises 145 residues: MVKVMVVAEVRPSEDVNKVLSAISNFFDFEKTNTRKEGIIDILVLEARTLKSLLKFHRVLRNERILDSARKYLMKGIEGNTIAFMIHKQAAAVGVLSFVDNDKESPLGAIKFYIEYQNPKEVVDWLAPRTAHGVPLWDNPIPPDV.

It belongs to the UPF0201 family.

The polypeptide is UPF0201 protein M164_1168 (Saccharolobus islandicus (strain M.16.4 / Kamchatka #3) (Sulfolobus islandicus)).